We begin with the raw amino-acid sequence, 422 residues long: UDP-N-acetylglucosamine 1-carboxyvinyltransferase (422 aa).

Lys22–Asn23 provides a ligand contact to phosphoenolpyruvate. Arg93 provides a ligand contact to UDP-N-acetyl-alpha-D-glucosamine. Cys117 (proton donor) is an active-site residue. Cys117 bears the 2-(S-cysteinyl)pyruvic acid O-phosphothioketal mark. Residues Arg122 to Leu126, Asp308, and Ile330 contribute to the UDP-N-acetyl-alpha-D-glucosamine site.

This sequence belongs to the EPSP synthase family. MurA subfamily.

It localises to the cytoplasm. It carries out the reaction phosphoenolpyruvate + UDP-N-acetyl-alpha-D-glucosamine = UDP-N-acetyl-3-O-(1-carboxyvinyl)-alpha-D-glucosamine + phosphate. It participates in cell wall biogenesis; peptidoglycan biosynthesis. Its function is as follows. Cell wall formation. Adds enolpyruvyl to UDP-N-acetylglucosamine. The sequence is that of UDP-N-acetylglucosamine 1-carboxyvinyltransferase from Legionella pneumophila (strain Paris).